Consider the following 125-residue polypeptide: MRHYEIVLMVHPDQSEQVSRMIERYSTVITSAQGKIHRLEDWGRRQLSYPIKKLHKAHYVLINLEASQKVMDELSKYLRFNEAIIRSMIMRVKHIVTEASPMVKTKDDNLVTEINKYSEEKNSEL.

It belongs to the bacterial ribosomal protein bS6 family.

Binds together with bS18 to 16S ribosomal RNA. In Baumannia cicadellinicola subsp. Homalodisca coagulata, this protein is Small ribosomal subunit protein bS6.